The sequence spans 118 residues: T cell receptor gamma variable 8 (118 aa).

The first 17 residues, 1–17 (MLLALALLLAFLPPASQ), serve as a signal peptide directing secretion. Positions 18-118 (KSSNLEGRTK…GVYYCATWDR (101 aa)) constitute an Ig-like domain. Cys41 and Cys113 are joined by a disulfide.

Gamma-delta TR is a heterodimer composed of a gamma and delta chain; disulfide-linked. The gamma-delta TR is associated with the transmembrane signaling CD3 coreceptor proteins following the stoichiometry: a single gamma-delta TR heterodimer associates with one CD3D-CD3E heterodimer, one CD3G-CD3E heterodimer and one CD247 homodimer forming a stable octameric structure. Upon activation, gamma-delta TR complex associates with FCER1G to initiate intracellular signaling.

It localises to the cell membrane. In terms of biological role, v region of the variable domain of T cell receptor (TR) gamma chain that participates in the antigen recognition. Gamma-delta TRs recognize a variety of self and foreign non-peptide antigens frequently expressed at the epithelial boundaries between the host and external environment, including endogenous lipids presented by MH-like protein CD1D and phosphoantigens presented by butyrophilin-like molecule BTN3A1. Upon antigen recognition induces rapid, innate-like immune responses involved in pathogen clearance and tissue repair. Binding of gamma-delta TR complex to antigen triggers phosphorylation of immunoreceptor tyrosine-based activation motifs (ITAMs) in the CD3 chains by the LCK and FYN kinases, allowing the recruitment, phosphorylation, and activation of ZAP70 that facilitates phosphorylation of the scaffolding proteins LCP2 and LAT. This lead to the formation of a supramolecular signalosome that recruits the phospholipase PLCG1, resulting in calcium mobilization and ERK activation, ultimately leading to T cell expansion and differentiation into effector cells. Gamma-delta TRs are produced through somatic rearrangement of a limited repertoire of variable (V), diversity (D), and joining (J) genes. The potential diversity of gamma-delta TRs is conferred by the unique ability to rearrange (D) genes in tandem and to utilize all three reading frames. The combinatorial diversity is considerably increased by the sequence exonuclease trimming and random nucleotide (N) region additions which occur during the V-(D)-J rearrangements. This Homo sapiens (Human) protein is T cell receptor gamma variable 8.